The chain runs to 430 residues: MLYEKFEYNINNLIGNFGLSKIAVAVSGGSDSVALLYLANIWAEKNNIELSVISVDHNLREQSKQETYYVQNISNSLNRKHYSLSFDHQNNFSNLQERARAGRYDLMTNLCLEFDILVLLTAHHEDDYVENFCLRLERNSGIFGLSSSNINWYNNIQIIRPLYNIPKSELVEYLVSHNIKWFEDESNSSDKYRRNIIRQKLAKGAGYIKAEIILQQLKINDLLDNKFKPELISAIAEAVKIFEYGFAFLDLVKFDKFSNEVKVQIINFLLIIISGQFRAARFYSVEPILKLITQDVNFKNTLHGCVVKRIQNELLIYREFGKKLPESKILLDKSIIWDNRFCITKNQENPDCVITYLSLEDYKTIKKQLDLAHLKDLSCKNHNAILFTLPIIKILEKVIAIPHISYYDNDMQNFEVSFAPNFVSRFTHFC.

27-32 (SGGSDS) provides a ligand contact to ATP.

The protein belongs to the tRNA(Ile)-lysidine synthase family.

It localises to the cytoplasm. The catalysed reaction is cytidine(34) in tRNA(Ile2) + L-lysine + ATP = lysidine(34) in tRNA(Ile2) + AMP + diphosphate + H(+). Its function is as follows. Ligates lysine onto the cytidine present at position 34 of the AUA codon-specific tRNA(Ile) that contains the anticodon CAU, in an ATP-dependent manner. Cytidine is converted to lysidine, thus changing the amino acid specificity of the tRNA from methionine to isoleucine. This Rickettsia akari (strain Hartford) protein is tRNA(Ile)-lysidine synthase.